Consider the following 384-residue polypeptide: Putative glutamate--cysteine ligase 2 (384 aa).

The protein belongs to the glutamate--cysteine ligase type 2 family. YbdK subfamily.

The enzyme catalyses L-cysteine + L-glutamate + ATP = gamma-L-glutamyl-L-cysteine + ADP + phosphate + H(+). Its function is as follows. ATP-dependent carboxylate-amine ligase which exhibits weak glutamate--cysteine ligase activity. This Ruegeria pomeroyi (strain ATCC 700808 / DSM 15171 / DSS-3) (Silicibacter pomeroyi) protein is Putative glutamate--cysteine ligase 2.